The chain runs to 94 residues: UPF0381 protein YfcZ (94 aa).

The protein belongs to the UPF0381 family.

This chain is UPF0381 protein YfcZ (yfcZ), found in Escherichia coli O6:H1 (strain CFT073 / ATCC 700928 / UPEC).